Consider the following 62-residue polypeptide: uncharacterized protein (62 aa).

The N-terminal stretch at 1–22 (MVNVALLLDQIIATPLRSMVEA) is a signal peptide.

This is an uncharacterized protein from Archaeoglobus fulgidus (strain ATCC 49558 / DSM 4304 / JCM 9628 / NBRC 100126 / VC-16).